A 65-amino-acid polypeptide reads, in one-letter code: MPKLKTRKAAAKRFKATVTGKFMRRRAFRNHLLDHKSPKLKRHLATKAVVDERDAENVRLMLPYA.

The protein belongs to the bacterial ribosomal protein bL35 family.

In Prochlorococcus marinus (strain MIT 9313), this protein is Large ribosomal subunit protein bL35.